We begin with the raw amino-acid sequence, 585 residues long: Pyruvate kinase (585 aa).

Arg32 provides a ligand contact to substrate. Residues Asn34, Ser36, Asp66, and Thr67 each coordinate K(+). 34–37 (NFSH) contributes to the ATP binding site. The ATP site is built by Arg73 and Lys156. Glu221 contributes to the Mg(2+) binding site. The substrate site is built by Gly244, Asp245, and Thr277. Asp245 contributes to the Mg(2+) binding site.

It belongs to the pyruvate kinase family. The protein in the C-terminal section; belongs to the PEP-utilizing enzyme family. Mg(2+) serves as cofactor. The cofactor is K(+).

The enzyme catalyses pyruvate + ATP = phosphoenolpyruvate + ADP + H(+). It functions in the pathway carbohydrate degradation; glycolysis; pyruvate from D-glyceraldehyde 3-phosphate: step 5/5. The chain is Pyruvate kinase (pyk) from Staphylococcus aureus (strain MRSA252).